A 373-amino-acid chain; its full sequence is Glutamine synthetase (373 aa).

At Ala-2 the chain carries N-acetylalanine. Residues 2–25 (ATSASSHLNKGIKQVYMALPQGDK) form a required for glutamine-induced ubiquitination by CRL4(CRBN) and proteasomal degradation region. N6-acetyllysine occurs at positions 11 and 14. The 81-residue stretch at 26–106 (VQAMYIWIDG…VFCEVFKYNR (81 aa)) folds into the GS beta-grasp domain. The residue at position 104 (Tyr-104) is a Phosphotyrosine. In terms of domain architecture, GS catalytic spans 113-373 (LRHTCKRIMD…TGDEPFQYKN (261 aa)). Glu-134 is an ATP binding site. Residues Glu-134, Glu-136, Glu-196, and Glu-203 each contribute to the Mn(2+) site. Residue 203-208 (EFQIGP) coordinates ATP. 246-247 (NW) contributes to the L-glutamate binding site. His-253 contacts Mn(2+). Residues 255-257 (NFS), Arg-319, and Arg-324 contribute to the ATP site. L-glutamate is bound at residue Arg-319. 336-338 (YFE) is a binding site for ADP. Residue Glu-338 coordinates Mn(2+). Arg-340 is an L-glutamate binding site. Phosphoserine is present on Ser-343.

Belongs to the glutamine synthetase family. As to quaternary structure, decamer; composed of two pentamers. Interacts with PALMD. Interacts with RHOJ. Interacts with BEST2; this interaction tethers a fraction of GLUL to the membrane, causing a decrease of cytosolic glutamine synthase (GS) activity and inhibits the chloride channel activity of BEST2 by affecting the gating at the aperture in the absence of intracellular glutamate. The cofactor is Mg(2+). Mn(2+) is required as a cofactor. In terms of processing, palmitoylated; undergoes autopalmitoylation. Post-translationally, acetylated by EP300/p300; acetylation is stimulated by increased glutamine levels and promotes ubiquitin-mediated proteasomal degradation. Ubiquitinated by ZNRF1. Ubiquitinated by the DCX (DDB1-CUL4-X-box) E3 ubiquitin-protein ligase complex called CRL4(CRBN), leading to proteasomal degradation.

The protein resides in the cytoplasm. The protein localises to the cytosol. It is found in the microsome. Its subcellular location is the mitochondrion. It localises to the cell membrane. The catalysed reaction is L-glutamate + NH4(+) + ATP = L-glutamine + ADP + phosphate + H(+). The enzyme catalyses L-cysteinyl-[protein] + hexadecanoyl-CoA = S-hexadecanoyl-L-cysteinyl-[protein] + CoA. Glutamine synthetase activity is inhibited by methionine sulfoximine (MSO). Functionally, glutamine synthetase that catalyzes the ATP-dependent conversion of glutamate and ammonia to glutamine. Its role depends on tissue localization: in the brain, it regulates the levels of toxic ammonia and converts neurotoxic glutamate to harmless glutamine, whereas in the liver, it is one of the enzymes responsible for the removal of ammonia. Plays a key role in ammonium detoxification during erythropoiesis: the glutamine synthetase activity is required to remove ammonium generated by porphobilinogen deaminase (HMBS) during heme biosynthesis to prevent ammonium accumulation and oxidative stress. Essential for proliferation of fetal skin fibroblasts. Independently of its glutamine synthetase activity, required for endothelial cell migration during vascular development. Involved in angiogenesis by regulating membrane localization and activation of the GTPase RHOJ, possibly by promoting RHOJ palmitoylation. May act as a palmitoyltransferase for RHOJ: able to autopalmitoylate and then transfer the palmitoyl group to RHOJ. Plays a role in ribosomal 40S subunit biogenesis. Through the interaction with BEST2, inhibits BEST2 channel activity by affecting the gating at the aperture in the absence of intracellular L-glutamate, but sensitizes BEST2 to intracellular L-glutamate, which promotes the opening of BEST2 and thus relieves its inhibitory effect on BEST2. The chain is Glutamine synthetase from Bos taurus (Bovine).